The chain runs to 397 residues: Lysophospholipid transporter LplT (397 aa).

The Periplasmic portion of the chain corresponds to 1-17; that stretch reads MSESVHTNTSLWSKGMK. The chain crosses the membrane as a helical span at residues 18 to 38; it reads AVIVAQFLSAFGDNALLFATL. Residues 39-52 are Cytoplasmic-facing; the sequence is ALLKAQFYPEWSQP. A helical membrane pass occupies residues 53-73; sequence ILQMVFVGAYILFAPFVGQVA. Residues 74-90 lie on the Periplasmic side of the membrane; sequence DSFAKGRVMMFANGLKL. Residues 91–111 form a helical membrane-spanning segment; the sequence is LGAASICFGINPFLGYTLVGV. Over 112-144 the chain is Cytoplasmic; it reads GAAAYSPAKYGILGELTTGSKLVKANGLMEAST. Residues 145 to 165 traverse the membrane as a helical segment; it reads IAAILLGSVAGGVLADWHVLV. Residue alanine 166 is a topological domain, periplasmic. A helical membrane pass occupies residues 167–187; that stretch reads LAACALAYGGAVVANIYIPKL. Residues 188-226 lie on the Cytoplasmic side of the membrane; that stretch reads AAARPGQSWNLISMTRSFLNACTSLWRNGETRFSLVGTS. The chain crosses the membrane as a helical span at residues 227–247; the sequence is LFWGAGVTLRFLLVLWVPVAL. Over 248–256 the chain is Periplasmic; the sequence is GITDNATPT. The helical transmembrane segment at 257-277 threads the bilayer; sequence YLNAMVAIGIVVGAGAAAKLV. The Cytoplasmic portion of the chain corresponds to 278 to 280; sequence TLE. The helical transmembrane segment at 281 to 301 threads the bilayer; it reads TVSRCMPAGILIGVVVLIFSL. The Periplasmic segment spans residues 302 to 304; it reads QHE. A helical membrane pass occupies residues 305–325; the sequence is LLPAYALLMLIGVLGGFFVVP. The Cytoplasmic portion of the chain corresponds to 326–343; sequence LNALLQERGKKSVGAGNA. The chain crosses the membrane as a helical span at residues 344–364; sequence IAVQNLGENSAMLLMLGIYSL. Over 365-366 the chain is Periplasmic; it reads AV. A helical transmembrane segment spans residues 367 to 387; it reads MVGIPVVPIGIGFGALFALAI. Residues 388 to 397 are Cytoplasmic-facing; the sequence is TALWIWQRRH.

It belongs to the major facilitator superfamily. LplT (TC 2.A.1.42) family.

It localises to the cell inner membrane. Functionally, catalyzes the facilitated diffusion of 2-acyl-glycero-3-phosphoethanolamine (2-acyl-GPE) into the cell. In Escherichia coli O7:K1 (strain IAI39 / ExPEC), this protein is Lysophospholipid transporter LplT.